Consider the following 205-residue polypeptide: Small ribosomal subunit protein uS4 (205 aa).

The segment at 20–44 (WGRPKSPVNRREYGPGQHGQRRKGK) is disordered. The S4 RNA-binding domain maps to 94 to 154 (SRLDAIVYRS…ERSKQLLLVL (61 aa)).

The protein belongs to the universal ribosomal protein uS4 family. In terms of assembly, part of the 30S ribosomal subunit. Contacts protein S5. The interaction surface between S4 and S5 is involved in control of translational fidelity.

In terms of biological role, one of the primary rRNA binding proteins, it binds directly to 16S rRNA where it nucleates assembly of the body of the 30S subunit. Functionally, with S5 and S12 plays an important role in translational accuracy. This is Small ribosomal subunit protein uS4 from Bartonella bacilliformis (strain ATCC 35685 / KC583 / Herrer 020/F12,63).